The chain runs to 100 residues: Small ribosomal subunit protein uS14 (100 aa).

Belongs to the universal ribosomal protein uS14 family. As to quaternary structure, part of the 30S ribosomal subunit. Contacts proteins S3 and S10.

Its function is as follows. Binds 16S rRNA, required for the assembly of 30S particles and may also be responsible for determining the conformation of the 16S rRNA at the A site. The protein is Small ribosomal subunit protein uS14 of Nostoc sp. (strain PCC 7120 / SAG 25.82 / UTEX 2576).